Here is a 182-residue protein sequence, read N- to C-terminus: 7-carboxy-7-deazaguanine synthase (182 aa).

Residues 12–14 (LQG) and R27 each bind substrate. The Radical SAM core domain maps to 18 to 182 (HTGTPAVFIR…LQTHKLIDIR (165 aa)). C31, C35, and C38 together coordinate [4Fe-4S] cluster. T40 is a Mg(2+) binding site. Residue T68 coordinates substrate. S-adenosyl-L-methionine-binding positions include G70 and 111 to 113 (SPK).

Belongs to the radical SAM superfamily. 7-carboxy-7-deazaguanine synthase family. In terms of assembly, homodimer. It depends on [4Fe-4S] cluster as a cofactor. S-adenosyl-L-methionine is required as a cofactor. Requires Mg(2+) as cofactor.

The enzyme catalyses 6-carboxy-5,6,7,8-tetrahydropterin + H(+) = 7-carboxy-7-deazaguanine + NH4(+). Its pathway is purine metabolism; 7-cyano-7-deazaguanine biosynthesis. Functionally, catalyzes the complex heterocyclic radical-mediated conversion of 6-carboxy-5,6,7,8-tetrahydropterin (CPH4) to 7-carboxy-7-deazaguanine (CDG), a step common to the biosynthetic pathways of all 7-deazapurine-containing compounds. This Bacteroides thetaiotaomicron (strain ATCC 29148 / DSM 2079 / JCM 5827 / CCUG 10774 / NCTC 10582 / VPI-5482 / E50) protein is 7-carboxy-7-deazaguanine synthase.